The primary structure comprises 180 residues: MSSTTPTTEPDQLPPHLDPQTYPRTTTNPTLNTHITLTYHPLDPTSALSKISSPNAGANVLFLGTTRNSFEDRPVAQLSYTAYPPLALKTLSKIAEDAVAKHELLGVVIGHRLGDVPIGESSIVIAVSAGHRGAAWRAGEEVLELCKEKAEIWKKEVFVDGQGEWRANRDRDAEGKLVQG.

A compositionally biased stretch (polar residues) spans 1-10; sequence MSSTTPTTEP. A disordered region spans residues 1 to 31; that stretch reads MSSTTPTTEPDQLPPHLDPQTYPRTTTNPTL. Positions 21-31 are enriched in low complexity; it reads TYPRTTTNPTL. Residues 131–132, K147, and 154–156 each bind substrate; these read HR and KKE.

It belongs to the MoaE family. MOCS2B subfamily. As to quaternary structure, heterotetramer; composed of 2 small (MOCS2A) and 2 large (MOCS2B) subunits.

It localises to the cytoplasm. The catalysed reaction is 2 [molybdopterin-synthase sulfur-carrier protein]-C-terminal-Gly-aminoethanethioate + cyclic pyranopterin phosphate + H2O = molybdopterin + 2 [molybdopterin-synthase sulfur-carrier protein]-C-terminal Gly-Gly + 2 H(+). It functions in the pathway cofactor biosynthesis; molybdopterin biosynthesis. In terms of biological role, catalytic subunit of the molybdopterin synthase complex, a complex that catalyzes the conversion of precursor Z into molybdopterin. Acts by mediating the incorporation of 2 sulfur atoms from thiocarboxylated MOCS2A into precursor Z to generate a dithiolene group. The protein is Molybdopterin synthase catalytic subunit of Aspergillus niger (strain ATCC MYA-4892 / CBS 513.88 / FGSC A1513).